Reading from the N-terminus, the 397-residue chain is Mitochondrial inner membrane magnesium transporter LPE10 (397 aa).

A mitochondrion-targeting transit peptide spans Met1–Asn48. Residues Leu318–Ile338 form a helical membrane-spanning segment. The YGMN signature appears at Tyr342 to Asn345. Residues Val355–Ser375 form a helical membrane-spanning segment.

Belongs to the CorA metal ion transporter (MIT) (TC 1.A.35) family. In terms of assembly, forms homooligomers. Interacts with MRS2.

It localises to the mitochondrion inner membrane. Mitochondrial inner membrane magnesium transporter required for mitochondrial magnesium homeostasis. Modulates the conductance of the MRS2 channel. Involved in the splicing of mRNA group II introns in mitochondria by affecting mitochondrial magnesium concentrations, which are critical for group II intron splicing. The protein is Mitochondrial inner membrane magnesium transporter LPE10 (LPE10) of Kluyveromyces lactis (strain ATCC 8585 / CBS 2359 / DSM 70799 / NBRC 1267 / NRRL Y-1140 / WM37) (Yeast).